The chain runs to 207 residues: Small ribosomal subunit protein uS3c (207 aa).

The 71-residue stretch at 39–109 (IRDYIFTNLL…QLKINIIDVT (71 aa)) folds into the KH type-2 domain.

The protein belongs to the universal ribosomal protein uS3 family. Part of the 30S ribosomal subunit.

It is found in the plastid. The protein resides in the chloroplast. The chain is Small ribosomal subunit protein uS3c (rps3) from Cyanidium caldarium (Red alga).